Here is a 264-residue protein sequence, read N- to C-terminus: S-adenosylmethionine decarboxylase proenzyme (264 aa).

Residue Ser113 is the Schiff-base intermediate with substrate; via pyruvic acid of the active site. Residue Ser113 is modified to Pyruvic acid (Ser); by autocatalysis. Catalysis depends on His118, which acts as the Proton acceptor; for processing activity. Cys141 (proton donor; for catalytic activity) is an active-site residue.

It belongs to the prokaryotic AdoMetDC family. Type 2 subfamily. In terms of assembly, heterooctamer of four alpha and four beta chains arranged as a tetramer of alpha/beta heterodimers. Requires pyruvate as cofactor. In terms of processing, is synthesized initially as an inactive proenzyme. Formation of the active enzyme involves a self-maturation process in which the active site pyruvoyl group is generated from an internal serine residue via an autocatalytic post-translational modification. Two non-identical subunits are generated from the proenzyme in this reaction, and the pyruvate is formed at the N-terminus of the alpha chain, which is derived from the carboxyl end of the proenzyme. The post-translation cleavage follows an unusual pathway, termed non-hydrolytic serinolysis, in which the side chain hydroxyl group of the serine supplies its oxygen atom to form the C-terminus of the beta chain, while the remainder of the serine residue undergoes an oxidative deamination to produce ammonia and the pyruvoyl group blocking the N-terminus of the alpha chain.

The enzyme catalyses S-adenosyl-L-methionine + H(+) = S-adenosyl 3-(methylsulfanyl)propylamine + CO2. It functions in the pathway amine and polyamine biosynthesis; S-adenosylmethioninamine biosynthesis; S-adenosylmethioninamine from S-adenosyl-L-methionine: step 1/1. Functionally, catalyzes the decarboxylation of S-adenosylmethionine to S-adenosylmethioninamine (dcAdoMet), the propylamine donor required for the synthesis of the polyamines spermine and spermidine from the diamine putrescine. The chain is S-adenosylmethionine decarboxylase proenzyme from Azotobacter vinelandii (strain DJ / ATCC BAA-1303).